We begin with the raw amino-acid sequence, 149 residues long: L-alanine exporter AlaE (149 aa).

A run of 4 helical transmembrane segments spans residues 16–36, 46–66, 83–105, and 115–135; these read FAMV…LSGM, LVAI…RDLI, ADVL…TVGA, and SSNI…LDYC.

The protein belongs to the AlaE exporter family.

It localises to the cell inner membrane. In terms of biological role, exports L-alanine. The sequence is that of L-alanine exporter AlaE from Salmonella typhimurium (strain LT2 / SGSC1412 / ATCC 700720).